A 279-amino-acid chain; its full sequence is Formamidopyrimidine-DNA glycosylase (279 aa).

P2 functions as the Schiff-base intermediate with DNA in the catalytic mechanism. E3 (proton donor) is an active-site residue. K58 functions as the Proton donor; for beta-elimination activity in the catalytic mechanism. DNA-binding residues include H92, R111, and R153. The FPG-type zinc finger occupies 238–272; sequence TVYGKEGQSCLSCSSTIIKTKHSGRSTFYCKTCQY. The active-site Proton donor; for delta-elimination activity is R262.

Belongs to the FPG family. As to quaternary structure, monomer. The cofactor is Zn(2+).

It carries out the reaction Hydrolysis of DNA containing ring-opened 7-methylguanine residues, releasing 2,6-diamino-4-hydroxy-5-(N-methyl)formamidopyrimidine.. The enzyme catalyses 2'-deoxyribonucleotide-(2'-deoxyribose 5'-phosphate)-2'-deoxyribonucleotide-DNA = a 3'-end 2'-deoxyribonucleotide-(2,3-dehydro-2,3-deoxyribose 5'-phosphate)-DNA + a 5'-end 5'-phospho-2'-deoxyribonucleoside-DNA + H(+). Functionally, involved in base excision repair of DNA damaged by oxidation or by mutagenic agents. Acts as a DNA glycosylase that recognizes and removes damaged bases. Has a preference for oxidized purines, such as 7,8-dihydro-8-oxoguanine (8-oxoG). Has AP (apurinic/apyrimidinic) lyase activity and introduces nicks in the DNA strand. Cleaves the DNA backbone by beta-delta elimination to generate a single-strand break at the site of the removed base with both 3'- and 5'-phosphates. This is Formamidopyrimidine-DNA glycosylase from Rickettsia massiliae (strain Mtu5).